Reading from the N-terminus, the 266-residue chain is Gasdermin bGSDM (266 aa).

Cys-3 carries the S-palmitoyl cysteine lipid modification. 4 beta stranded membrane passes run 69-85, 97-115, 163-180, and 189-205; these read ISGQ…GLSI, KLGL…FEFQ, KFTI…ELTI, and GNVK…KICY.

This sequence belongs to the bacterial gasdermin family. Monomer. In terms of assembly, forms large, homooligomeric ring-shaped pores when inserted in membranes. Palmitoylation helps stabilize the inactive state; may self palmitoylate. Palmitoylation plays a significant role in pore formation.

It is found in the cytoplasm. It localises to the cell inner membrane. Its activity is regulated as follows. The full-length protein before cleavage is inactive: intramolecular interactions between the N-terminal domain and the C-terminal region as well as the lipid modification, mediate autoinhibition. The pyroptosis-like-inducing activity is carried by the released N-terminal domain (Gasdermin bGSDM, N-terminus). In terms of biological role, precursor of a pore-forming protein involved in defense against bacteriophages. Expression of bGSDM and the neighboring protease gene (Ga0182885_104520) is toxic in E.coli. Cleavage of this precursor by its dedicated protease releases the active moiety (gasdermin bGSDM, N-terminus) which inserts into membranes, forming pores and triggering cell death. Its function is as follows. Pore-forming protein that causes membrane permeabilization via a pyroptosis-like activity. Makes ring-like pores when released. The sequence is that of Gasdermin bGSDM from Desulfuromonadales bacterium.